A 140-amino-acid polypeptide reads, in one-letter code: Ribosome maturation factor RimP (140 aa).

This sequence belongs to the RimP family.

The protein localises to the cytoplasm. Functionally, required for maturation of 30S ribosomal subunits. The protein is Ribosome maturation factor RimP of Campylobacter lari (strain RM2100 / D67 / ATCC BAA-1060).